Here is a 174-residue protein sequence, read N- to C-terminus: Ribosome maturation factor RimM (174 aa).

A PRC barrel domain is found at 97–171 (SDGEYYWCDL…RMTVSLPEGL (75 aa)).

The protein belongs to the RimM family. Binds ribosomal protein uS19.

Its subcellular location is the cytoplasm. An accessory protein needed during the final step in the assembly of 30S ribosomal subunit, possibly for assembly of the head region. Essential for efficient processing of 16S rRNA. May be needed both before and after RbfA during the maturation of 16S rRNA. It has affinity for free ribosomal 30S subunits but not for 70S ribosomes. In Geotalea daltonii (strain DSM 22248 / JCM 15807 / FRC-32) (Geobacter daltonii), this protein is Ribosome maturation factor RimM.